Reading from the N-terminus, the 66-residue chain is Trypsin inhibitor (66 aa).

5 cysteine pairs are disulfide-bonded: cysteine 5–cysteine 28, cysteine 16–cysteine 44, cysteine 19–cysteine 58, cysteine 21–cysteine 38, and cysteine 43–cysteine 64.

Its subcellular location is the secreted. This is Trypsin inhibitor from Ascaris suum (Pig roundworm).